Reading from the N-terminus, the 334-residue chain is MTVRIGINGFGRIGRNVFRAAAARSSELEIVAVNDLGDVPTMAHLLAYDSILGRFPEEVTAEPGAIRVGDRTIKVLAERDPGALPWGDLGVDIVIESTGIFTDAAKARSHVDGGAKKVIIAAPASGEDFTVVLGVNDGDYDPERHTIISNASCTTNCLGVLAKVLHDAVGIDSGMMTTVHAYTQDQNLQDAPHKDLRRARAAALNIVPTSSGAAKAIGLVLPELAGRLDAFALRVPVPTGSVTDLTVTTRRGTSVEEVKEAYAAAASGPYKGLLSYVDAPLVSTDIVGDPASCVFDAGLTRVSGPQVKVVGWYDNEWGYSNRLIDLATLIGSSL.

NAD(+)-binding positions include 12 to 13 (RI), Asp-35, and Arg-79. D-glyceraldehyde 3-phosphate contacts are provided by residues 152 to 154 (SCT), Thr-183, Arg-198, 211 to 212 (SG), and Arg-234. Cys-153 acts as the Nucleophile in catalysis. Residue Asn-315 coordinates NAD(+).

This sequence belongs to the glyceraldehyde-3-phosphate dehydrogenase family. Homotetramer.

The protein localises to the cytoplasm. It catalyses the reaction D-glyceraldehyde 3-phosphate + phosphate + NAD(+) = (2R)-3-phospho-glyceroyl phosphate + NADH + H(+). Its pathway is carbohydrate degradation; glycolysis; pyruvate from D-glyceraldehyde 3-phosphate: step 1/5. With respect to regulation, inhibited by pentalenolactone (PL). In terms of biological role, catalyzes the oxidative phosphorylation of glyceraldehyde 3-phosphate (G3P) to 1,3-bisphosphoglycerate (BPG) using the cofactor NAD. The first reaction step involves the formation of a hemiacetal intermediate between G3P and a cysteine residue, and this hemiacetal intermediate is then oxidized to a thioester, with concomitant reduction of NAD to NADH. The reduced NADH is then exchanged with the second NAD, and the thioester is attacked by a nucleophilic inorganic phosphate to produce BPG. In Streptomyces arenae, this protein is Glyceraldehyde-3-phosphate dehydrogenase 2 (gap2).